We begin with the raw amino-acid sequence, 443 residues long: Xaa-Pro dipeptidase (443 aa).

Mn(2+)-binding residues include Asp246, Asp257, His339, Glu384, and Glu423.

It belongs to the peptidase M24B family. Bacterial-type prolidase subfamily. Mn(2+) is required as a cofactor.

The catalysed reaction is Xaa-L-Pro dipeptide + H2O = an L-alpha-amino acid + L-proline. Functionally, splits dipeptides with a prolyl residue in the C-terminal position. This Shigella dysenteriae serotype 1 (strain Sd197) protein is Xaa-Pro dipeptidase.